The sequence spans 251 residues: Ubiquinone/menaquinone biosynthesis C-methyltransferase UbiE (251 aa).

S-adenosyl-L-methionine-binding positions include T74, D95, and 123-124; that span reads DA.

This sequence belongs to the class I-like SAM-binding methyltransferase superfamily. MenG/UbiE family.

It catalyses the reaction a 2-demethylmenaquinol + S-adenosyl-L-methionine = a menaquinol + S-adenosyl-L-homocysteine + H(+). The enzyme catalyses a 2-methoxy-6-(all-trans-polyprenyl)benzene-1,4-diol + S-adenosyl-L-methionine = a 5-methoxy-2-methyl-3-(all-trans-polyprenyl)benzene-1,4-diol + S-adenosyl-L-homocysteine + H(+). It participates in quinol/quinone metabolism; menaquinone biosynthesis; menaquinol from 1,4-dihydroxy-2-naphthoate: step 2/2. Its pathway is cofactor biosynthesis; ubiquinone biosynthesis. Methyltransferase required for the conversion of demethylmenaquinol (DMKH2) to menaquinol (MKH2) and the conversion of 2-polyprenyl-6-methoxy-1,4-benzoquinol (DDMQH2) to 2-polyprenyl-3-methyl-6-methoxy-1,4-benzoquinol (DMQH2). The polypeptide is Ubiquinone/menaquinone biosynthesis C-methyltransferase UbiE (Idiomarina loihiensis (strain ATCC BAA-735 / DSM 15497 / L2-TR)).